The primary structure comprises 128 residues: Fluoride-specific ion channel FluC (128 aa).

Transmembrane regions (helical) follow at residues 3-23 (FSVIFAVGIGGFFGAISRFLI), 34-54 (LFPVGTLTVNVLGSFIIGFLY), 69-89 (FITGFLGALTTFSTFSLETLL), and 100-120 (FLNILLNVILTISSTFAAIIL). The Na(+) site is built by Gly75 and Thr78.

Belongs to the fluoride channel Fluc/FEX (TC 1.A.43) family.

It is found in the cell inner membrane. The catalysed reaction is fluoride(in) = fluoride(out). With respect to regulation, na(+) is not transported, but it plays an essential structural role and its presence is essential for fluoride channel function. Fluoride-specific ion channel. Important for reducing fluoride concentration in the cell, thus reducing its toxicity. The sequence is that of Fluoride-specific ion channel FluC from Nitratiruptor sp. (strain SB155-2).